A 1084-amino-acid polypeptide reads, in one-letter code: Autophagy-related protein 11 (1084 aa).

Coiled-coil stretches lie at residues 585-739 (VQNL…LTES) and 847-879 (VIRRFNDIESLAKKLRKENKNKKILLQKYTNDK). Disordered stretches follow at residues 925 to 961 (SMIPPRVIPNRVEPASNTNNSNPSSVPEDMGSPNMNR) and 973 to 1007 (NIGSNNSNNNYVNTGNANGNNKPETNIDTTSSTNA). Low complexity-rich tracts occupy residues 940-949 (SNTNNSNPSS) and 973-993 (NIGSNNSNNNYVNTGNANGNN). Residues 994–1007 (KPETNIDTTSSTNA) show a composition bias toward polar residues.

It belongs to the ATG11 family. Homodimer and potential homooligomers. Interacts with ATG1 kinase and the ATG19 and ATG34 cargo protein transporters. Interacts with ATG9, ATG17 and ATG20.

The protein resides in the preautophagosomal structure membrane. It is found in the vacuole membrane. In terms of biological role, involved in cytoplasm to vacuole transport (Cvt), pexophagy, mitophagy and nucleophagy. Recruits mitochondria for their selective degradation via autophagy (mitophagy) during starvation, through its interaction with ATG32. Works as scaffold proteins that recruit ATG proteins to the pre-autophagosome (PAS), the site of vesicle/autophagosome formation. Required for ATG9 anterograde transport from the mitochondria to the PAS. Also recruits the ATG19-prAPE1 complex to the PAS. Required for the Cvt vesicles completion. The chain is Autophagy-related protein 11 from Kluyveromyces marxianus (strain DMKU3-1042 / BCC 29191 / NBRC 104275) (Yeast).